A 136-amino-acid chain; its full sequence is Large ribosomal subunit protein uL22 (136 aa).

This sequence belongs to the universal ribosomal protein uL22 family. Part of the 50S ribosomal subunit.

This protein binds specifically to 23S rRNA; its binding is stimulated by other ribosomal proteins, e.g. L4, L17, and L20. It is important during the early stages of 50S assembly. It makes multiple contacts with different domains of the 23S rRNA in the assembled 50S subunit and ribosome. Functionally, the globular domain of the protein is located near the polypeptide exit tunnel on the outside of the subunit, while an extended beta-hairpin is found that lines the wall of the exit tunnel in the center of the 70S ribosome. The polypeptide is Large ribosomal subunit protein uL22 (Bacteroides fragilis (strain ATCC 25285 / DSM 2151 / CCUG 4856 / JCM 11019 / LMG 10263 / NCTC 9343 / Onslow / VPI 2553 / EN-2)).